A 571-amino-acid chain; its full sequence is DM7 family protein CG15332 (571 aa).

The interval 440 to 472 is disordered; it reads TRDDGINTADYQSQFPELEPEPEPEPEDEGEDV. Positions 457 to 471 are enriched in acidic residues; it reads LEPEPEPEPEDEGED.

This sequence belongs to the DM7 family.

In Drosophila melanogaster (Fruit fly), this protein is DM7 family protein CG15332.